The chain runs to 337 residues: Integrase/recombinase (337 aa).

In terms of domain architecture, Core-binding (CB) spans 14 to 94 (VKVLDQLRER…ALLFFYGKVL (81 aa)). Residues 112-328 (RLPVVLTPDE…GGAGVRSPLD (217 aa)) enclose the Tyr recombinase domain. Catalysis depends on residues arginine 146, lysine 171, histidine 277, arginine 280, and histidine 303. Residue tyrosine 312 is the O-(3'-phospho-DNA)-tyrosine intermediate of the active site.

It belongs to the 'phage' integrase family.

In terms of biological role, putative integrase believed to be involved in the insertion of antibiotic resistance genes into plasmids and transposons. The chain is Integrase/recombinase (int) from Escherichia coli.